The following is an 84-amino-acid chain: Large ribosomal subunit protein bL27 (84 aa).

It belongs to the bacterial ribosomal protein bL27 family.

The chain is Large ribosomal subunit protein bL27 from Salinispora tropica (strain ATCC BAA-916 / DSM 44818 / JCM 13857 / NBRC 105044 / CNB-440).